The following is a 1006-amino-acid chain: E3 ubiquitin-protein ligase MIB1 (1006 aa).

The 69-residue stretch at Asn-6 to Ala-74 folds into the MIB/HERC2 1 domain. The ZZ-type zinc-finger motif lies at His-80–Ser-132. Positions 85, 88, 100, 103, 109, 112, 118, and 122 each coordinate Zn(2+). The MIB/HERC2 2 domain occupies Ser-143–Ala-221. Ser-408 is subject to Phosphoserine. ANK repeat units lie at residues Asp-430–Gly-460, Ala-463–Ala-492, Asp-496–Ala-525, Arg-529–Leu-558, Glu-562–Ile-591, Asn-595–Glu-627, Asp-631–Ile-661, Asn-665–Ile-694, and Asp-698–Ala-729. RING-type zinc fingers lie at residues Cys-819–Lys-854 and Cys-866–Arg-901. The stretch at Gln-935–Met-962 forms a coiled coil. The RING-type 3 zinc finger occupies Cys-963–Arg-996.

As to quaternary structure, interacts with CEP131 and PCM1. In terms of processing, ubiquitinated; this modification is inhibited in response to cellular stress, such as ultraviolet light (UV) radiation or heat shock. Ubiquitinated; possibly via autoubiquitination. Detected in all tissues tested. Present in embryo, embryonic stem cells, bladder, skeletal muscle, bladder, uterus, testis, stomach, colon, ileum, trachea, lung, aorta, kidney, spleen, liver and vas deferens (at protein level). Highly expressed in testis.

It is found in the cytoplasm. It localises to the cytoskeleton. Its subcellular location is the microtubule organizing center. The protein resides in the centrosome. The protein localises to the centriolar satellite. It is found in the cell membrane. It carries out the reaction S-ubiquitinyl-[E2 ubiquitin-conjugating enzyme]-L-cysteine + [acceptor protein]-L-lysine = [E2 ubiquitin-conjugating enzyme]-L-cysteine + N(6)-ubiquitinyl-[acceptor protein]-L-lysine.. It participates in protein modification; protein ubiquitination. Its function is as follows. E3 ubiquitin-protein ligase that mediates ubiquitination of Delta receptors, which act as ligands of Notch proteins. Positively regulates the Delta-mediated Notch signaling by ubiquitinating the intracellular domain of Delta, leading to endocytosis of Delta receptors. Involved in ubiquitination of centriolar satellite CEP131, CEP290 and PCM1 proteins and hence inhibits primary cilium formation in proliferating cells. Mediates 'Lys-63'-linked polyubiquitination of TBK1, which probably participates in kinase activation. Probably mediates ubiquitination and subsequent proteasomal degradation of DAPK1, thereby antagonizing anti-apoptotic effects of DAPK1 to promote TNF-induced apoptosis. This is E3 ubiquitin-protein ligase MIB1 (Mib1) from Mus musculus (Mouse).